Here is a 692-residue protein sequence, read N- to C-terminus: E3 ubiquitin-protein ligase brl1 (692 aa).

Residues 302–370 are a coiled coil; that stretch reads SNEEKIESIN…RNERDSLVAK (69 aa). The RING-type zinc finger occupies 639–679; it reads CSVCNFSNWKSKLIPNCGHAFCSNCMEPFYEHKTSTCPQCE.

This sequence belongs to the BRE1 family. Component of the histone H2B ubiquitin ligase complex (HULC) composed of at least brl1, brl2, rhp6 and shf1.

It localises to the nucleus. The catalysed reaction is S-ubiquitinyl-[E2 ubiquitin-conjugating enzyme]-L-cysteine + [acceptor protein]-L-lysine = [E2 ubiquitin-conjugating enzyme]-L-cysteine + N(6)-ubiquitinyl-[acceptor protein]-L-lysine.. Its pathway is protein modification; protein ubiquitination. E3 ubiquitin-protein ligase which belongs to the histone H2B ubiquitin ligase complex (HULC) which mediates monoubiquitination of histone H2B to form H2BK123ub1. H2BK123ub1 gives a specific tag for epigenetic transcriptional activation and is also a prerequisite for H3K4me and H3K79me formation. This Schizosaccharomyces pombe (strain 972 / ATCC 24843) (Fission yeast) protein is E3 ubiquitin-protein ligase brl1 (brl1).